The chain runs to 401 residues: Nicotinate phosphoribosyltransferase (401 aa).

His224 is subject to Phosphohistidine; by autocatalysis.

It belongs to the NAPRTase family. Post-translationally, transiently phosphorylated on a His residue during the reaction cycle. Phosphorylation strongly increases the affinity for substrates and increases the rate of nicotinate D-ribonucleotide production. Dephosphorylation regenerates the low-affinity form of the enzyme, leading to product release.

It carries out the reaction nicotinate + 5-phospho-alpha-D-ribose 1-diphosphate + ATP + H2O = nicotinate beta-D-ribonucleotide + ADP + phosphate + diphosphate. Its pathway is cofactor biosynthesis; NAD(+) biosynthesis; nicotinate D-ribonucleotide from nicotinate: step 1/1. In terms of biological role, catalyzes the synthesis of beta-nicotinate D-ribonucleotide from nicotinate and 5-phospho-D-ribose 1-phosphate at the expense of ATP. The chain is Nicotinate phosphoribosyltransferase from Pseudomonas putida (strain GB-1).